The sequence spans 503 residues: Methylthioalkylmalate synthase 3, chloroplastic (503 aa).

Residues 1-51 (MASLLLTSSSMITTSCRSMVLRSGLPIGSSFPSLRLTRPYDKATLFVSCCS) constitute a chloroplast transit peptide. Residues 85-359 (VRVLDTTLRD…YTKIDSRQIM (275 aa)) enclose the Pyruvate carboxyltransferase domain.

Belongs to the alpha-IPM synthase/homocitrate synthase family. Requires Mn(2+) as cofactor. As to expression, highly expressed in roots, leaves, and siliques. Lower amounts in stems and flowers.

The protein localises to the plastid. It localises to the chloroplast. It catalyses the reaction an omega-(methylsulfanyl)-2-oxoalkanoate + acetyl-CoA + H2O = a 2-(omega-methylsulfanyl)alkylmalate + CoA + H(+). With respect to regulation, not activated by ATP. Determines the side chain length of aliphatic glucosinolate structures. Accepts all the omega-methylthio-2-oxoalkanoic acids needed to form the known C3 to C8 glucosinolates. Also able to convert pyruvate to citramalate, 2-oxoisovalerate to isopropylmalate, 4-methyl-2-oxopentanoate and 5-methyl-2-oxohexanoate for Leu-derived glucosinolates, 3-methyl-2-oxopentanoate for Ile-derived glucosinolates and phenylpyruvate to phenylethylglucosinolate. The protein is Methylthioalkylmalate synthase 3, chloroplastic (MAM3) of Arabidopsis thaliana (Mouse-ear cress).